Here is a 187-residue protein sequence, read N- to C-terminus: Adenylate kinase 1 (187 aa).

Residue 14-19 (GSGKGT) coordinates ATP. Positions 34 to 63 (STGDMLRQAIADGTELGNQAKGYMDKGELV) are NMP. AMP contacts are provided by residues Thr-35, Arg-40, 61–63 (ELV), 89–92 (GFPR), and Gln-96. The segment at 130-136 (ARGRADD) is LID. Arg-131 lines the ATP pocket. 2 residues coordinate AMP: Arg-133 and Arg-144. Gln-172 contacts ATP.

The protein belongs to the adenylate kinase family. Monomer.

The protein resides in the cytoplasm. The catalysed reaction is AMP + ATP = 2 ADP. It functions in the pathway purine metabolism; AMP biosynthesis via salvage pathway; AMP from ADP: step 1/1. In terms of biological role, catalyzes the reversible transfer of the terminal phosphate group between ATP and AMP. Plays an important role in cellular energy homeostasis and in adenine nucleotide metabolism. The polypeptide is Adenylate kinase 1 (Synechocystis sp. (strain ATCC 27184 / PCC 6803 / Kazusa)).